The chain runs to 198 residues: Large ribosomal subunit protein bL12m (198 aa).

Residues 1 to 36 constitute a mitochondrion transit peptide; that stretch reads MLPAAARPLWGPCLGLRAAAFRLARRQVPCVCAVRH. Residues lysine 125, lysine 138, lysine 142, and lysine 144 each carry the N6-acetyllysine modification. At lysine 150 the chain carries N6-acetyllysine; alternate. Lysine 150 carries the N6-succinyllysine; alternate modification. Lysine 150 participates in a covalent cross-link: Glycyl lysine isopeptide (Lys-Gly) (interchain with G-Cter in ubiquitin). Position 162 is an N6-succinyllysine (lysine 162). An N6-acetyllysine mark is found at lysine 163 and lysine 173. At lysine 178 the chain carries N6-acetyllysine; alternate. Lysine 178 is subject to N6-succinyllysine; alternate. Lysine 185 is modified (N6-acetyllysine).

Belongs to the bacterial ribosomal protein bL12 family. In terms of assembly, component of the mitochondrial large ribosomal subunit (mt-LSU). Mature mammalian 55S mitochondrial ribosomes consist of a small (28S) and a large (39S) subunit. The 28S small subunit contains a 12S ribosomal RNA (12S mt-rRNA) and 30 different proteins. The 39S large subunit contains a 16S rRNA (16S mt-rRNA), a copy of mitochondrial valine transfer RNA (mt-tRNA(Val)), which plays an integral structural role, and 52 different proteins. bL12m interacts with NOA1. In terms of processing, two mature forms are produced by differential two-step proteolytic cleavage. Cleaved by the mitochondrial processing protease to produce the long mature form and subsequently by the mitochondrial intermediate protease to produce the short mature form. In the presence of CUL3, undergoes 'Lys-63'-linked ubiquitination at Lys-150 which results in proteasomal degradation.

Its subcellular location is the mitochondrion matrix. Its function is as follows. As a component of the mitochondrial large ribosomal subunit, plays a role in mitochondrial translation. When present in mitochondria as a free protein not associated with the ribosome, associates with mitochondrial RNA polymerase POLRMT to activate transcription. Required for POLRMT stability. This Homo sapiens (Human) protein is Large ribosomal subunit protein bL12m (MRPL12).